The following is a 67-amino-acid chain: MCLRVKDEEPAQVYPEGPRRHHPSDVSTRQSVEKRINYMQNLQKEKRKLGKRFARPNPIPDTGILWT.

Disordered regions lie at residues 1–32 (MCLR…RQSV) and 47–67 (RKLG…ILWT). The stretch at 27-53 (STRQSVEKRINYMQNLQKEKRKLGKRF) forms a coiled coil.

This is Coiled-coil domain-containing protein 179 (Ccdc179) from Mus musculus (Mouse).